Consider the following 164-residue polypeptide: Prolyl-tRNA editing protein ProX (164 aa).

Belongs to the PRORSD1 family.

The protein localises to the cytoplasm. Functionally, functions in trans to edit the amino acid moiety from incorrectly charged Ala-tRNA(Pro). Has weak activity on correctly charged tRNA(Ala), tRNA(Gly) as well as tRNA(Cys), tRNA(Met), tRNA(Pro), tRNA(Ser) and tRNA(Leu). The protein is Prolyl-tRNA editing protein ProX (proX) of Acetoanaerobium sticklandii (strain ATCC 12662 / DSM 519 / JCM 1433 / CCUG 9281 / NCIMB 10654 / HF) (Clostridium sticklandii).